The chain runs to 489 residues: MNLELLESFGQNYPEEFDGSLDCISLAVTCAFNKYGTLLAVGCNDGRIVIWDFLTRGIAKIISAHVHPVCSLSWTRNGHKLLSASTDNNVCIWDVLTGELEHKYRFPSPVLKVQFDPRNDNRLLVCPMRYAAVLVEVGGTHRCLPLDSDGDLNIVASFDRRGKHIYTGNAKGKILVLDVETFEVVASFRIIVGTSSATAVKSIEFARRGDAFLINTSDRVIRVYDSKEIITLGKDGEPEPIQKLQDLVNKTTWKKCCFSGDGEYICAGSARQHALYIWEKSIGNLVKILHGTKGELLLDVVWHPVRPIIASISSGLVSIWAQNQVENWSAFAPDFKELDENVEYEERESEFDIADEDKSVDLNADAQQDEEIEVDVQKVEPVAAFCSSDEEGEDENALQFLPMAPEVEDPEDGWTGQDGLEPSAVMLGHMEPHDYEDDIMASKRRRMQLYDVSLPDAPTDETHPLISSKASKDKQQPVGGKKAAGRTKK.

WD repeat units follow at residues 22–63, 64–103, 147–187, 195–234, 248–290, and 292–330; these read DCIS…KIIS, AHVH…LEHK, DSDG…VVAS, SSAT…TLGK, VNKT…KILH, and TKGE…NWSA. Positions 451 to 489 are disordered; that stretch reads DVSLPDAPTDETHPLISSKASKDKQQPVGGKKAAGRTKK.

In terms of assembly, core component of several methyltransferase-containing complexes. Component of the SET1 complex, composed at least of the catalytic subunit Set1, wds/WDR5, Wdr82, Rbbp5, ash2, Cfp1/CXXC1, hcf and Dpy-30L1. Component of the MLL3/4 complex composed at least of the catalytic subunit trr, ash2, Rbbp5, Dpy-30L1, wds, hcf, ptip, Pa1, Utx, Lpt and Ncoa6.

It is found in the nucleus. Its function is as follows. Component of the SET1 complex that specifically di- and trimethylates 'Lys-4' of histone H3 and of the MLL3/4 complex which also methylates histone H3 'Lys-4'. This is Retinoblastoma-binding protein 5 homolog from Drosophila melanogaster (Fruit fly).